Consider the following 200-residue polypeptide: GTP cyclohydrolase-2 (200 aa).

Residue 50-54 (RVHSE) participates in GTP binding. Positions 55, 66, and 68 each coordinate Zn(2+). Residues Q71, 93–95 (EGR), and T115 each bind GTP. D127 functions as the Proton acceptor in the catalytic mechanism. The active-site Nucleophile is R129. The GTP site is built by T150 and K155.

The protein belongs to the GTP cyclohydrolase II family. Zn(2+) serves as cofactor.

It catalyses the reaction GTP + 4 H2O = 2,5-diamino-6-hydroxy-4-(5-phosphoribosylamino)-pyrimidine + formate + 2 phosphate + 3 H(+). It functions in the pathway cofactor biosynthesis; riboflavin biosynthesis; 5-amino-6-(D-ribitylamino)uracil from GTP: step 1/4. Its function is as follows. Catalyzes the conversion of GTP to 2,5-diamino-6-ribosylamino-4(3H)-pyrimidinone 5'-phosphate (DARP), formate and pyrophosphate. In Acinetobacter baumannii (strain AB0057), this protein is GTP cyclohydrolase-2.